A 335-amino-acid polypeptide reads, in one-letter code: MNQWMELANRVLAGAEVTDEEALSILHCPDEDILLLMHGAFHIRKHFYGKKVKLNMIMNAKSGLCPENCGYCSQSAISKAPIESYRMVNKETLLEGAKRAHDLNIGTYCIVASGRGPSNREVDQVVDAVQEIKETYGLKVCACLGLLKPEQAKRLKDAGVDRYNHNLNTSQRNHSNITTSHTYDDRVNTVEIAKESGLSPCSGAIIGIKETKQDVIDIAKSLKALDADSIPVNFLHAIDGTPLEGVNELNPLYCLKVLALFRFINPSKEIRISGGREVNLRSLQPLGLYAANSIFVGDYLTTAGQEETEDHKMLSDLGFEVESVEEMKASLSAKS.

Residues 47 to 276 (FYGKKVKLNM…SKEIRISGGR (230 aa)) form the Radical SAM core domain. [4Fe-4S] cluster contacts are provided by Cys65, Cys69, and Cys72. Residues Cys109, Cys141, Cys201, and Arg271 each contribute to the [2Fe-2S] cluster site.

This sequence belongs to the radical SAM superfamily. Biotin synthase family. As to quaternary structure, homodimer. [4Fe-4S] cluster serves as cofactor. [2Fe-2S] cluster is required as a cofactor.

It carries out the reaction (4R,5S)-dethiobiotin + (sulfur carrier)-SH + 2 reduced [2Fe-2S]-[ferredoxin] + 2 S-adenosyl-L-methionine = (sulfur carrier)-H + biotin + 2 5'-deoxyadenosine + 2 L-methionine + 2 oxidized [2Fe-2S]-[ferredoxin]. The protein operates within cofactor biosynthesis; biotin biosynthesis; biotin from 7,8-diaminononanoate: step 2/2. Functionally, catalyzes the conversion of dethiobiotin (DTB) to biotin by the insertion of a sulfur atom into dethiobiotin via a radical-based mechanism. This Bacillus subtilis subsp. natto protein is Biotin synthase.